The following is a 624-amino-acid chain: Kelch-like ECH-associated protein 1 (624 aa).

Residues 1–27 (MQPEPRPSGAGAHTQFLPLRSQRPEGA) are disordered. Cys38 carries the S-(2-succinyl)cysteine modification. Residues 77 to 149 (CDVTLQVKYE…AYTASISMGE (73 aa)) form the BTB domain. An N5-[4-(S-L-cysteinyl)-5-methyl-1H-imidazol-2-yl]-L-ornithine (Arg-Cys) (interchain with C-151 in KEAP1) cross-link involves residue Arg135. S-(2-succinyl)cysteine is present on residues Cys151 and Cys241. Cys151 carries the post-translational modification S-(2,3-dicarboxypropyl)cysteine; alternate. S-nitrosocysteine; alternate is present on Cys151. Cys151 participates in a covalent cross-link: N5-[4-(S-L-cysteinyl)-5-methyl-1H-imidazol-2-yl]-L-ornithine (Cys-Arg) (interchain with R-135 in KEAP1). Positions 184–286 (AIGIANFAEQ…TPHFLQMQLQ (103 aa)) constitute a BACK domain. 2 positions are modified to S-(2,3-dicarboxypropyl)cysteine: Cys257 and Cys273. 2 positions are modified to S-(2-succinyl)cysteine: Cys288 and Cys319. Position 288 is an S-(2,3-dicarboxypropyl)cysteine; alternate (Cys288). Kelch repeat units follow at residues 327-372 (LIYT…VVGG), 373-423 (LLYA…VIDG), 424-470 (HIYA…VLNR), 471-517 (LLYA…VLHN), 519-564 (IYAA…VHQG), and 565-611 (RIYV…VTME). Cys434 is modified (S-cGMP-cysteine). Cys613 bears the S-(2-succinyl)cysteine mark.

It belongs to the KEAP1 family. In terms of assembly, component of the BCR(KEAP1) E3 ubiquitin ligase complex, at least composed of 2 molecules of CUL3, 2 molecules of KEAP1, and RBX1. Interacts with NFE2L2/NRF2; the interaction is direct. Forms a ternary complex with NFE2L2/NRF2 and PGAM5. Interacts with (phosphorylated) SQSTM1/p62; the interaction is direct and inactivates the BCR(KEAP1) complex by sequestering it in inclusion bodies, promoting its degradation. Interacts with NFE2L1. Interacts with BPTF and PTMA. Interacts with MAP1LC3B. Interacts indirectly with ENC1. Interacts with SESN1 and SESN2. Interacts with HSP90AA1 and HSP90AB1. Interacts with PGCKA1; this interaction prevents the ubiquitination of KEAP1 by TRIM25, thus protecting KEAP1 protein from degradation. Non-enzymatic covalent modifications of reactive cysteines by electrophile metabolites inactivate the BCR(KEAP1) complex. Accumulation of fumarate promotes the formation of cysteine S-succination (S-(2-succinyl)cysteine), leading to inactivate the BCR(KEAP1) complex and promote NFE2L2/NRF2 nuclear accumulation and activation. Nitric oxide-dependent 8-Nitro-cGMP formation promotes cysteine guanylation (S-cGMP-cysteine), leading to NFE2L2/NRF2 nuclear accumulation and activation. Itaconate, an anti-inflammatory metabolite generated in response to lipopolysaccharide, alkylates cysteines, activating NFE2L2/NRF2. Methylglyoxal, a reactive metabolite that accumulates when the glycolytic enzyme PGK1 is inhibited, promotes formation of a methylimidazole cross-link between proximal Cys-151 and Arg-135 on another KEAP1 molecule, resulting in an inactive dimer that inactivates the BCR(KEAP1) complex. In terms of processing, degraded via a proteasomal-independent process during selective autophagy: interaction with phosphorylated SQSTM1/p62 sequesters KEAP1 in inclusion bodies, leading to its degradation. Post-translationally, auto-ubiquitinated by the BCR(KEAP1) complex. Quinone-induced oxidative stress, but not sulforaphane, increases its ubiquitination. Ubiquitination and subsequent degradation is most pronounced following prolonged exposure of cells to oxidative stress, particularly in glutathione-deficient cells that are highly susceptible to oxidative stress. Deubiquitinated by USP25; leading to stabilization. Ubiquitinated by TRIM25; leading to degradation upon ER stress.

It localises to the cytoplasm. The protein localises to the nucleus. The protein operates within protein modification; protein ubiquitination. With respect to regulation, ubiquitin ligase activity of the BCR(KEAP1) complex is inhibited by oxidative stress and electrophile metabolites such as sulforaphane. Electrophile metabolites react with reactive cysteine residues in KEAP1 and trigger non-enzymatic covalent modifications of these cysteine residues, leading to inactivate the ubiquitin ligase activity of the BCR(KEAP1) complex. Selective autophagy also inactivates the BCR(KEAP1) complex via interaction between KEAP1 and SQSTM1/p62, which sequesters the complex in inclusion bodies and promotes its degradation. Its function is as follows. Substrate-specific adapter of a BCR (BTB-CUL3-RBX1) E3 ubiquitin ligase complex that regulates the response to oxidative stress by targeting NFE2L2/NRF2 for ubiquitination. KEAP1 acts as a key sensor of oxidative and electrophilic stress: in normal conditions, the BCR(KEAP1) complex mediates ubiquitination and degradation of NFE2L2/NRF2, a transcription factor regulating expression of many cytoprotective genes. In response to oxidative stress, different electrophile metabolites trigger non-enzymatic covalent modifications of highly reactive cysteine residues in KEAP1, leading to inactivate the ubiquitin ligase activity of the BCR(KEAP1) complex, promoting NFE2L2/NRF2 nuclear accumulation and expression of phase II detoxifying enzymes. In response to selective autophagy, KEAP1 is sequestered in inclusion bodies following its interaction with SQSTM1/p62, leading to inactivation of the BCR(KEAP1) complex and activation of NFE2L2/NRF2. The BCR(KEAP1) complex also mediates ubiquitination of SQSTM1/p62, increasing SQSTM1/p62 sequestering activity and degradation. The BCR(KEAP1) complex also targets BPTF and PGAM5 for ubiquitination and degradation by the proteasome. In Sus scrofa (Pig), this protein is Kelch-like ECH-associated protein 1.